The sequence spans 205 residues: Small ribosomal subunit protein uS4 (205 aa).

Positions 1–16 (MSKRESSKYKIDRRMG) are enriched in basic and acidic residues. Residues 1–46 (MSKRESSKYKIDRRMGENIWGRPKSPVNRREYGPGQHGQRRKGKLS) form a disordered region. The 64-residue stretch at 94 to 157 (SRLDAIVYRA…KQLVIVLEAV (64 aa)) folds into the S4 RNA-binding domain.

The protein belongs to the universal ribosomal protein uS4 family. As to quaternary structure, part of the 30S ribosomal subunit. Contacts protein S5. The interaction surface between S4 and S5 is involved in control of translational fidelity.

Functionally, one of the primary rRNA binding proteins, it binds directly to 16S rRNA where it nucleates assembly of the body of the 30S subunit. In terms of biological role, with S5 and S12 plays an important role in translational accuracy. This Rhizobium leguminosarum bv. trifolii (strain WSM2304) protein is Small ribosomal subunit protein uS4.